The chain runs to 232 residues: MFQFCLLILLLAPGRFFSALGKPQETLTVENREGSDSKAIPTCREASFCAFLQKNPIDSNLDVLPTCTCTGGTTCSHSWDPNDGKSITEGNKQFKFCSNVPDTIKHECSAEEKALTGIFEEDKVTKKHLAYYGFLHCICPEHSDYPENSYDGTETVEGDKKITTEYYHCERLKTCKSDDTCHALAIGETKKIYYKDCNCPEGQTCPFELKSAYKTEYKETTDKFTTYSMRCQ.

The first 21 residues, M1–G21, serve as a signal peptide directing secretion. A propeptide spanning residues K22–R32 is cleaved from the precursor.

Post-translationally, contains 8 disulfide bonds. As to expression, expressed by the venom gland.

It localises to the secreted. This is U-scoloptoxin(11)-Ssd2a from Scolopendra dehaani (Thai centipede).